Here is a 97-residue protein sequence, read N- to C-terminus: Na(+)/H(+) antiporter subunit F1 (97 aa).

The next 3 helical transmembrane spans lie at 3-23, 35-55, and 60-80; these read HNVI…AMLI, VVAL…FSIL, and YMIV…AVFS.

It belongs to the CPA3 antiporters (TC 2.A.63) subunit F family. In terms of assembly, may form a heterooligomeric complex that consists of seven subunits: mnhA1, mnhB1, mnhC1, mnhD1, mnhE1, mnhF1 and mnhG1.

It localises to the cell membrane. Mnh complex is a Na(+)/H(+) antiporter involved in Na(+) excretion. The protein is Na(+)/H(+) antiporter subunit F1 (mnhF1) of Staphylococcus aureus (strain Mu3 / ATCC 700698).